A 393-amino-acid polypeptide reads, in one-letter code: Putative acid--amine ligase HI_0929 (393 aa).

103–105 lines the ATP pocket; it reads RFD. Mg(2+) contacts are provided by aspartate 105, glutamate 117, and asparagine 119. ATP-binding positions include lysine 267, lysine 303, glycine 310, glutamine 343, and 378–380; that span reads AVT.

Belongs to the glutathionylspermidine synthase preATP-grasp family.

In terms of biological role, may be a ligase forming an amide bond. Shows ATPase activity. This chain is Putative acid--amine ligase HI_0929, found in Haemophilus influenzae (strain ATCC 51907 / DSM 11121 / KW20 / Rd).